Consider the following 1347-residue polypeptide: Protein HUA2-LIKE 3 (1347 aa).

The 58-residue stretch at 24–81 (VGDLVLAKVKGFPAWPAVVDEPEKWGHSADSKKVTVHFFGTQQIAFCNHGDVESFTEE) folds into the PWWP domain. Disordered regions lie at residues 110-137 (KLKQQDQASGPKYAEETTAGSSGNTSQL), 251-320 (DGGP…SGSK), and 383-402 (DSCQRSQNSHERLNERPCEE). Residues 127–137 (TAGSSGNTSQL) are compositionally biased toward polar residues. Residues 302 to 314 (VESNNNSRNEGNG) are compositionally biased toward low complexity. A compositionally biased stretch (basic and acidic residues) spans 390 to 402 (NSHERLNERPCEE). Residues 845-986 (DVQCTVESFE…HHIRELDSLS (142 aa)) form the CID domain. 4 disordered regions span residues 1037 to 1069 (RDEDEGSDSDGGDFESVTPEHESRSLEEHVTPS), 1121 to 1140 (TSHQNVTSSSPPARPSQNAQ), 1147 to 1223 (YSNG…YSYM), and 1259 to 1347 (RMRP…WHQR). Over residues 1038–1049 (DEDEGSDSDGGD) the composition is skewed to acidic residues. Positions 1054 to 1069 (TPEHESRSLEEHVTPS) are enriched in basic and acidic residues. Residues 1181–1191 (PSYSSRVSLSK) show a composition bias toward polar residues. Residues 1208-1217 (SSHPPPPPPS) show a composition bias toward pro residues. Over residues 1259–1272 (RMRPEPCENRDNWR) the composition is skewed to basic and acidic residues.

In terms of tissue distribution, expressed throughout young primordia, and vegetative and reproductive apices.

The protein localises to the nucleus. Functionally, probable transcription factor that acts with partial redundancy with HULK1 and HULK2. Plays diverse and essential roles in the control of plant development, physiology and flowering time. In Arabidopsis thaliana (Mouse-ear cress), this protein is Protein HUA2-LIKE 3.